Here is a 285-residue protein sequence, read N- to C-terminus: uncharacterized protein (285 aa).

The chain crosses the membrane as a helical span at residues 6 to 26 (IKYFSTIIVAVVAVLAGWWLW).

It belongs to the membrane fusion protein (MFP) (TC 8.A.1) family.

The protein localises to the membrane. This is an uncharacterized protein from Escherichia coli (strain K12).